The chain runs to 865 residues: cGMP-specific 3',5'-cyclic phosphodiesterase (865 aa).

Residue serine 92 is modified to Phosphoserine. GAF domains lie at 154–304 (DVTA…GIVL) and 336–493 (SLEV…GLGI). The region spanning 526 to 850 (ETRELQSLAA…QKWQALAEQQ (325 aa)) is the PDEase domain. Histidine 603 acts as the Proton donor in catalysis. Residues histidine 607, histidine 643, aspartate 644, and aspartate 754 each coordinate Zn(2+). Aspartate 644 is a Mg(2+) binding site. Glutamine 807 is a 3',5'-cyclic GMP binding site.

The protein belongs to the cyclic nucleotide phosphodiesterase family. It depends on Zn(2+) as a cofactor. Mg(2+) is required as a cofactor. Post-translationally, phosphorylation is regulated by binding of cGMP to the two allosteric sites. Phosphorylation by PRKG1 leads to its activation.

The enzyme catalyses 3',5'-cyclic GMP + H2O = GMP + H(+). Its pathway is purine metabolism; 3',5'-cyclic GMP degradation; GMP from 3',5'-cyclic GMP: step 1/1. With respect to regulation, most potently inhibited by zaprinast and dipyridamole. In terms of biological role, plays a role in signal transduction by regulating the intracellular concentration of cyclic nucleotides. This phosphodiesterase catalyzes the specific hydrolysis of cGMP to 5'-GMP. Specifically regulates nitric-oxide-generated cGMP. The sequence is that of cGMP-specific 3',5'-cyclic phosphodiesterase (PDE5A) from Bos taurus (Bovine).